The chain runs to 24 residues: Coenzyme PQQ synthesis protein A (24 aa).

A cross-link (pyrroloquinoline quinone (Glu-Tyr)) is located at residues 16-20 (EVTMY).

This sequence belongs to the PqqA family.

It participates in cofactor biosynthesis; pyrroloquinoline quinone biosynthesis. Its function is as follows. Required for coenzyme pyrroloquinoline quinone (PQQ) biosynthesis. PQQ is probably formed by cross-linking a specific glutamate to a specific tyrosine residue and excising these residues from the peptide. The protein is Coenzyme PQQ synthesis protein A of Pseudomonas syringae pv. syringae (strain B728a).